The sequence spans 632 residues: MKKISDYSLLFKINSPEDLRKLAIEQVEQVCKELREYIIEVLSENPGHLGSNLGTVELTVALHYVFNTPYDRIVWDVGHQAYGHKILTERRESFHTLRKLGGISGFPNPQESEYDAFIAGHASNSISAALGMAIASWLKGENRKIVAIIGDGSITGGLAFEGLNNVSSNPNDLLIVLNDNNMAIDRSVGGLSQSLIKITTSYTYNTIRFKLYNFLKKYSIIKERERGFILRFTNSLKALLTKQHNIFEGLNIRYFGPIDGHNIKELVKVFEDIKSMKGPKLLHVCTVKGKGFGPAENKADVWHAPGKFNPETGERIKVWSENLPSLYQDVFGHTLVELARMNNNIVGVTPAMSSGCSMTFLMKEMPHRTFDVGIAEGHAITFAAGLAKEGMIPFCNVYSSFMQRAYDNIIHDAVLQNLNMILCLDRAGLVGEDGVTHHGVLDLAYLRCIPNITITAPLNEKDLRNLMFTAIQPNAKGVFVIRYPKGYGELKNWEYSFEALPVGKGRKLKEGKEIAVVSIGTIGNLARKAIRLVEKLGISVAHYDMIYLKPIDEELLHEIGKNYRCVVVIEDGTIKGGLGTAVIEFMVQNGYDPKIKQIGVPDEFIPHGTIAELYKLCGMDIKSIVKCLIEEK.

Thiamine diphosphate contacts are provided by residues histidine 79 and 120 to 122; that span reads GHA. Aspartate 151 contributes to the Mg(2+) binding site. Residues 152–153, asparagine 180, phenylalanine 292, and glutamate 376 each bind thiamine diphosphate; that span reads GS. Asparagine 180 provides a ligand contact to Mg(2+).

It belongs to the transketolase family. DXPS subfamily. As to quaternary structure, homodimer. Mg(2+) is required as a cofactor. The cofactor is thiamine diphosphate.

It carries out the reaction D-glyceraldehyde 3-phosphate + pyruvate + H(+) = 1-deoxy-D-xylulose 5-phosphate + CO2. Its pathway is metabolic intermediate biosynthesis; 1-deoxy-D-xylulose 5-phosphate biosynthesis; 1-deoxy-D-xylulose 5-phosphate from D-glyceraldehyde 3-phosphate and pyruvate: step 1/1. Catalyzes the acyloin condensation reaction between C atoms 2 and 3 of pyruvate and glyceraldehyde 3-phosphate to yield 1-deoxy-D-xylulose-5-phosphate (DXP). This is 1-deoxy-D-xylulose-5-phosphate synthase from Azobacteroides pseudotrichonymphae genomovar. CFP2.